Reading from the N-terminus, the 320-residue chain is Acetyl-coenzyme A carboxylase carboxyl transferase subunit alpha (320 aa).

Residues 41–295 (KIEEKAQQAL…GDAIAAAFAE (255 aa)) enclose the CoA carboxyltransferase C-terminal domain.

It belongs to the AccA family. In terms of assembly, acetyl-CoA carboxylase is a heterohexamer composed of biotin carboxyl carrier protein (AccB), biotin carboxylase (AccC) and two subunits each of ACCase subunit alpha (AccA) and ACCase subunit beta (AccD).

It localises to the cytoplasm. It carries out the reaction N(6)-carboxybiotinyl-L-lysyl-[protein] + acetyl-CoA = N(6)-biotinyl-L-lysyl-[protein] + malonyl-CoA. Its pathway is lipid metabolism; malonyl-CoA biosynthesis; malonyl-CoA from acetyl-CoA: step 1/1. Component of the acetyl coenzyme A carboxylase (ACC) complex. First, biotin carboxylase catalyzes the carboxylation of biotin on its carrier protein (BCCP) and then the CO(2) group is transferred by the carboxyltransferase to acetyl-CoA to form malonyl-CoA. The protein is Acetyl-coenzyme A carboxylase carboxyl transferase subunit alpha of Rhodopseudomonas palustris (strain ATCC BAA-98 / CGA009).